The following is a 409-amino-acid chain: Nitrogen permease regulator 2 homolog (409 aa).

The protein belongs to the NPR2 family.

Its subcellular location is the cytoplasm. The protein resides in the nucleus. Functionally, mediates inactivation of the TORC1 complex in response to amino acid starvation. Post-transcriptional regulator of nitrogen permeases. The sequence is that of Nitrogen permease regulator 2 homolog from Schizosaccharomyces pombe (strain 972 / ATCC 24843) (Fission yeast).